Here is an 87-residue protein sequence, read N- to C-terminus: Small ribosomal subunit protein uS17 (87 aa).

This sequence belongs to the universal ribosomal protein uS17 family. As to quaternary structure, part of the 30S ribosomal subunit.

In terms of biological role, one of the primary rRNA binding proteins, it binds specifically to the 5'-end of 16S ribosomal RNA. The chain is Small ribosomal subunit protein uS17 from Staphylococcus aureus (strain JH1).